The chain runs to 275 residues: 2,3,4,5-tetrahydropyridine-2,6-dicarboxylate N-succinyltransferase (275 aa).

Arg104 and Asp141 together coordinate substrate.

This sequence belongs to the transferase hexapeptide repeat family. As to quaternary structure, homotrimer.

It localises to the cytoplasm. The enzyme catalyses (S)-2,3,4,5-tetrahydrodipicolinate + succinyl-CoA + H2O = (S)-2-succinylamino-6-oxoheptanedioate + CoA. Its pathway is amino-acid biosynthesis; L-lysine biosynthesis via DAP pathway; LL-2,6-diaminopimelate from (S)-tetrahydrodipicolinate (succinylase route): step 1/3. This is 2,3,4,5-tetrahydropyridine-2,6-dicarboxylate N-succinyltransferase from Haemophilus influenzae (strain PittEE).